Here is a 138-residue protein sequence, read N- to C-terminus: Sporulation-specific protein 13 (138 aa).

Residues 1–11 (MMSNSQISKLF) are compositionally biased toward polar residues. Residues 1 to 31 (MMSNSQISKLFSSISNKENSNENALKESTNK) form a disordered region. The span at 12 to 23 (SSISNKENSNEN) shows a compositional bias: low complexity. Residues 16–104 (NKENSNENAL…KRELDYLRAK (89 aa)) are a coiled coil.

In terms of assembly, interacts with spo2.

The protein resides in the cytoplasm. It localises to the cytoskeleton. The protein localises to the microtubule organizing center. Its subcellular location is the spindle pole body. Involved in sporulation. Plays a significant role in modification of the spindle pole body prior to spore formation and is required for initiating forespore membrane formation. This chain is Sporulation-specific protein 13 (spo13), found in Schizosaccharomyces pombe (strain 972 / ATCC 24843) (Fission yeast).